The sequence spans 235 residues: Probable deoxycytidine kinase FPV151 (235 aa).

30–38 (GNISAGKST) is an ATP binding site. 3 residues coordinate substrate: glutamate 53, tyrosine 68, and glutamine 79. The Proton acceptor role is filled by glutamate 104. The substrate site is built by arginine 105, aspartate 110, and glutamate 172.

The protein belongs to the DCK/DGK family.

It carries out the reaction 2'-deoxycytidine + a ribonucleoside 5'-triphosphate = dCMP + a ribonucleoside 5'-diphosphate + H(+). The chain is Probable deoxycytidine kinase FPV151 from Vertebrata (FPV).